The primary structure comprises 226 residues: Killer cell lectin-like receptor subfamily E member 1 (226 aa).

Residues 1 to 28 (MDEAPVTRSTLNVNSQQKSKAKNKIKNT) are disordered. Over 1–68 (MDEAPVTRST…GKGNCSPPWR (68 aa)) the chain is Cytoplasmic. Residues 7–18 (TRSTLNVNSQQK) show a composition bias toward polar residues. The helical; Signal-anchor for type II membrane protein transmembrane segment at 69–89 (LLSSVLGAMCLLLMAVAMVMT) threads the bilayer. Over 90–226 (TFTTKSSSER…ANKLTYICKK (137 aa)) the chain is Extracellular. 3 disulfides stabilise this stretch: cysteine 113/cysteine 124, cysteine 141/cysteine 224, and cysteine 202/cysteine 216. Residues 120–225 (FRCSCYFFSK…CANKLTYICK (106 aa)) enclose the C-type lectin domain. Asparagine 145 carries N-linked (GlcNAc...) asparagine glycosylation.

Heterodimer; with KLRI1 or KLRI2. Expressed in natural killer (NK) cells (at protein level). Also detected in natural killer T (NKT) cells (at protein level). Has little or no expression in T cells (at protein level).

The protein resides in the cell membrane. Its function is as follows. Lectin-like receptor for natural killer (NK) cells. Can either inhibit or activate NK cell cytotoxic activity, depending on its binding partner. Heterodimer formation with KLRI1 mediates NK cell inhibition whereas heterodimer formation with KLRI2 mediates NK cell activation. Plays a role in allogeneic recognition by the immune system. In Mus musculus (Mouse), this protein is Killer cell lectin-like receptor subfamily E member 1.